The primary structure comprises 438 residues: Chromosomal replication initiator protein DnaA (438 aa).

The domain I, interacts with DnaA modulators stretch occupies residues 1-68; sequence MKDNILSALK…VVKESLGKDA (68 aa). A domain II region spans residues 68–98; that stretch reads ATFEIVYKEIDITQENEEKGPLVRKRPLLIT. The tract at residues 99-314 is domain III, AAA+ region; it reads PLNPKYTFEN…GAILKLIAYK (216 aa). 4 residues coordinate ATP: G142, G144, K145, and T146. A domain IV, binds dsDNA region spans residues 315–438; the sequence is NLYGSLNLSI…TKNFAQGESI (124 aa).

Belongs to the DnaA family. As to quaternary structure, oligomerizes as a right-handed, spiral filament on DNA at oriC.

The protein resides in the cytoplasm. Plays an essential role in the initiation and regulation of chromosomal replication. ATP-DnaA binds to the origin of replication (oriC) to initiate formation of the DNA replication initiation complex once per cell cycle. Binds the DnaA box (a 9 base pair repeat at the origin) and separates the double-stranded (ds)DNA. Forms a right-handed helical filament on oriC DNA; dsDNA binds to the exterior of the filament while single-stranded (ss)DNA is stabiized in the filament's interior. The ATP-DnaA-oriC complex binds and stabilizes one strand of the AT-rich DNA unwinding element (DUE), permitting loading of DNA polymerase. After initiation quickly degrades to an ADP-DnaA complex that is not apt for DNA replication. Binds acidic phospholipids. In Thermosipho africanus (strain TCF52B), this protein is Chromosomal replication initiator protein DnaA.